The following is a 470-amino-acid chain: Siroheme synthase (470 aa).

Residues 1–213 (MSDATDPGWF…GEHAAARQVL (213 aa)) form a precorrin-2 dehydrogenase /sirohydrochlorin ferrochelatase region. NAD(+) contacts are provided by residues 28 to 29 (GI) and 49 to 50 (PR). Residues 224-470 (GEVWLVGAGP…VVTPPPLSGT (247 aa)) are uroporphyrinogen-III C-methyltransferase. Pro233 is a binding site for S-adenosyl-L-methionine. Asp256 acts as the Proton acceptor in catalysis. Residue Lys278 is the Proton donor of the active site. Residues 309-311 (GGD), Ile314, 339-340 (TA), Met392, and Gly421 each bind S-adenosyl-L-methionine.

In the N-terminal section; belongs to the precorrin-2 dehydrogenase / sirohydrochlorin ferrochelatase family. This sequence in the C-terminal section; belongs to the precorrin methyltransferase family.

It catalyses the reaction uroporphyrinogen III + 2 S-adenosyl-L-methionine = precorrin-2 + 2 S-adenosyl-L-homocysteine + H(+). The catalysed reaction is precorrin-2 + NAD(+) = sirohydrochlorin + NADH + 2 H(+). It carries out the reaction siroheme + 2 H(+) = sirohydrochlorin + Fe(2+). The protein operates within cofactor biosynthesis; adenosylcobalamin biosynthesis; precorrin-2 from uroporphyrinogen III: step 1/1. Its pathway is cofactor biosynthesis; adenosylcobalamin biosynthesis; sirohydrochlorin from precorrin-2: step 1/1. It participates in porphyrin-containing compound metabolism; siroheme biosynthesis; precorrin-2 from uroporphyrinogen III: step 1/1. It functions in the pathway porphyrin-containing compound metabolism; siroheme biosynthesis; siroheme from sirohydrochlorin: step 1/1. The protein operates within porphyrin-containing compound metabolism; siroheme biosynthesis; sirohydrochlorin from precorrin-2: step 1/1. Functionally, multifunctional enzyme that catalyzes the SAM-dependent methylations of uroporphyrinogen III at position C-2 and C-7 to form precorrin-2 via precorrin-1. Then it catalyzes the NAD-dependent ring dehydrogenation of precorrin-2 to yield sirohydrochlorin. Finally, it catalyzes the ferrochelation of sirohydrochlorin to yield siroheme. The polypeptide is Siroheme synthase (Gluconacetobacter diazotrophicus (strain ATCC 49037 / DSM 5601 / CCUG 37298 / CIP 103539 / LMG 7603 / PAl5)).